Here is a 155-residue protein sequence, read N- to C-terminus: Chaperone protein IpgC (155 aa).

Belongs to the LcrH/SycD chaperone family.

Its subcellular location is the cytoplasm. Functionally, assists the correct folding of nascent IpaB. Once it is bound to IpaB, it binds to IpaC and impedes their premature association that would lead to their degradation in the absence of IpcG. The sequence is that of Chaperone protein IpgC (ipgC) from Shigella dysenteriae.